The sequence spans 322 residues: MDTSSINAQSIFDDNAATLKLSWLTGHEGWERGFSADTVGNATSSADLVGHLNLIHPNRIQVLGEAEIDYYQRQTDEDRSRHMAELIALEPPFLVVAGGAAAPPELVLRCTRSSTPLFTTPMSAAAVIDSLRLYMSRILAPRATLHGVFLDILGMGVLLTGDSGLGKSELGLELISRGHGLVADDAVDFVRLGPDFVEGRCPPLLQNLLEVRGLGLLDIKTIFGETAVRRKMKLKLIVQLVRRPDGEFQRLPLESQTVDVLGLPISKVTIQVAAGRNLAVLVEAAVRNTILQLRGIDTLRDFMDRQRLAMQDPDSQFPGKLV.

Active-site residues include His146 and Lys167. 161–168 (GDSGLGKS) is a binding site for ATP. Position 168 (Ser168) interacts with Mg(2+). The active-site Proton acceptor; for phosphorylation activity. Proton donor; for dephosphorylation activity is Asp185. Residues 209-218 (LEVRGLGLLD) are important for the catalytic mechanism of both phosphorylation and dephosphorylation. Glu210 serves as a coordination point for Mg(2+). The active site involves Arg250. Positions 271–276 (QVAAGR) are important for the catalytic mechanism of dephosphorylation.

The protein belongs to the HPrK/P family. In terms of assembly, homohexamer. Mg(2+) is required as a cofactor.

The catalysed reaction is [HPr protein]-L-serine + ATP = [HPr protein]-O-phospho-L-serine + ADP + H(+). It carries out the reaction [HPr protein]-O-phospho-L-serine + phosphate + H(+) = [HPr protein]-L-serine + diphosphate. In terms of biological role, catalyzes the ATP- as well as the pyrophosphate-dependent phosphorylation of a specific serine residue in HPr, a phosphocarrier protein of the phosphoenolpyruvate-dependent sugar phosphotransferase system (PTS). HprK/P also catalyzes the pyrophosphate-producing, inorganic phosphate-dependent dephosphorylation (phosphorolysis) of seryl-phosphorylated HPr (P-Ser-HPr). This is HPr kinase/phosphorylase from Burkholderia cenocepacia (strain HI2424).